The chain runs to 215 residues: uncharacterized protein (215 aa).

A disordered region spans residues His120–Asn147.

This is an uncharacterized protein from Homo sapiens (Human).